The chain runs to 141 residues: Large ribosomal subunit protein uL11 (141 aa).

This sequence belongs to the universal ribosomal protein uL11 family. In terms of assembly, part of the ribosomal stalk of the 50S ribosomal subunit. Interacts with L10 and the large rRNA to form the base of the stalk. L10 forms an elongated spine to which L12 dimers bind in a sequential fashion forming a multimeric L10(L12)X complex. One or more lysine residues are methylated.

Forms part of the ribosomal stalk which helps the ribosome interact with GTP-bound translation factors. This Chlorobium phaeobacteroides (strain DSM 266 / SMG 266 / 2430) protein is Large ribosomal subunit protein uL11.